The sequence spans 131 residues: Protein yippee-like PJ691.02 (131 aa).

The Yippee domain maps to 12–109; that stretch reads RCYVCAKCKT…LEMQDAVLQR (98 aa). The Zn(2+) site is built by cysteine 16, cysteine 19, cysteine 72, and cysteine 75.

Belongs to the yippee family.

In Schizosaccharomyces pombe (strain 972 / ATCC 24843) (Fission yeast), this protein is Protein yippee-like PJ691.02.